The sequence spans 414 residues: Protein FAM81B (414 aa).

Residues 1–13 are compositionally biased toward polar residues; the sequence is MTSETDINKSASP. Residues 1-43 form a disordered region; it reads MTSETDINKSASPTAAAKEQPEEPDGPLPGSASEQEKKVRFSP. Coiled-coil stretches lie at residues 70–94, 121–149, 188–223, and 266–414; these read NTQR…LEQA, LLEN…QIKA, KLSG…NLDT, and LNLY…LQES.

It belongs to the FAM81 family.

The sequence is that of Protein FAM81B (FAM81B) from Bos taurus (Bovine).